Here is a 131-residue protein sequence, read N- to C-terminus: Classical arabinogalactan protein 2 (131 aa).

Residues 1 to 21 form the signal peptide; the sequence is MNSKAMQALIFLGFLATSCLA. Position 22 is a pyrrolidone carboxylic acid (Q22). 4-hydroxyproline is present on residues P24, P26, P28, P34, and P35. P24, P26, P28, P34, and P35 each carry an O-linked (Ara...) hydroxyproline glycan. The interval 24–106 is disordered; sequence PAPAPTTVTP…PGPDGAADAP (83 aa). 2 stretches are compositionally biased toward pro residues: residues 25 to 38 and 49 to 64; these read APAP…PTAL and IASP…PAPT. Low complexity-rich tracts occupy residues 65–76 and 90–106; these read TSPTTSPVASPP and TPTS…ADAP. A lipid anchor (GPI-anchor amidated serine) is attached at S107. A propeptide spans 108 to 131 (removed in mature form); that stretch reads AAWANKAFLVGTAVAGALYAVVLA.

Belongs to the classical AGP family. In terms of processing, O-glycosylated on hydroxyprolines; noncontiguous hydroxylproline residues are glycosylated with arabinogalactan.

It is found in the cell membrane. In terms of biological role, proteoglycan that seems to be implicated in diverse developmental roles such as differentiation, cell-cell recognition, embryogenesis and programmed cell death. The sequence is that of Classical arabinogalactan protein 2 (AGP2) from Arabidopsis thaliana (Mouse-ear cress).